A 406-amino-acid chain; its full sequence is Tryptophan synthase beta chain (406 aa).

Lys-97 carries the post-translational modification N6-(pyridoxal phosphate)lysine.

It belongs to the TrpB family. As to quaternary structure, tetramer of two alpha and two beta chains. It depends on pyridoxal 5'-phosphate as a cofactor.

It carries out the reaction (1S,2R)-1-C-(indol-3-yl)glycerol 3-phosphate + L-serine = D-glyceraldehyde 3-phosphate + L-tryptophan + H2O. It functions in the pathway amino-acid biosynthesis; L-tryptophan biosynthesis; L-tryptophan from chorismate: step 5/5. Its function is as follows. The beta subunit is responsible for the synthesis of L-tryptophan from indole and L-serine. The polypeptide is Tryptophan synthase beta chain (Lacticaseibacillus paracasei (strain ATCC 334 / BCRC 17002 / CCUG 31169 / CIP 107868 / KCTC 3260 / NRRL B-441) (Lactobacillus paracasei)).